A 95-amino-acid chain; its full sequence is MRKYEVMYIIRPTVDDEAKKAVIERFNNVLTSNGAEITGTKDWGKRRLAYEINDFREGFYQIVNVQSDAAAVQEFDRLAKISDDIIRHIVVKEEV.

It belongs to the bacterial ribosomal protein bS6 family.

Binds together with bS18 to 16S ribosomal RNA. The protein is Small ribosomal subunit protein bS6 of Bacillus pumilus (strain SAFR-032).